We begin with the raw amino-acid sequence, 336 residues long: MATIKDVAKLAGVSTTTVSHVINKTRFVAEDTSKAVWDAIQQLNYSPSAVARSLKVNTTKSIGMIITTSEAPYFAEIVLAVEEHCYQQGYSLFLCNTQNEPEKIQNHLDMLIKKRVDGVLVMCSEYTRDSLELFNGTNIPMVVMDWGKADDHSDRILDNSFEGGYLATQHLIENGHKDIGVIAGHLSKTLSKERYEGFLKAMHEANLPVRQEWIYEGDFEPESGFEQMNNLLRLEKLPTAIFCFSDTIALGAISALSEKGLSVPSYMSIIGYDNIHSSRFYSPPLTTIHQSKSRLGVKALNILLERIKIDKTQYQPQTIEFHPELVLRRSVRNLNK.

An HTH lacI-type domain is found at 2–56 (ATIKDVAKLAGVSTTTVSHVINKTRFVAEDTSKAVWDAIQQLNYSPSAVARSLKV). Positions 4-23 (IKDVAKLAGVSTTTVSHVIN) form a DNA-binding region, H-T-H motif. Residues 48–56 (SAVARSLKV) mediate DNA binding. Residues tyrosine 73, lysine 188, phenylalanine 219, and aspartate 273 each contribute to the hypoxanthine site.

Homodimer.

Its pathway is purine metabolism; purine nucleotide biosynthesis [regulation]. Its function is as follows. Is the main repressor of the genes involved in the de novo synthesis of purine nucleotides, regulating purB, purC, purEK, purF, purHD, purL, purMN and guaBA expression. PurR is allosterically activated to bind its cognate DNA by binding the purine corepressors, hypoxanthine or guanine, thereby effecting transcription repression. The polypeptide is HTH-type transcriptional repressor PurR (Actinobacillus pleuropneumoniae serotype 5b (strain L20)).